Reading from the N-terminus, the 59-residue chain is MARRESSGGSGGLMSSAGLMRYFEAEESAIKIDPKTVIIAAVASGAFIWILNFTYGRFW.

The Cytoplasmic portion of the chain corresponds to 1–33 (MARRESSGGSGGLMSSAGLMRYFEAEESAIKID). A helical transmembrane segment spans residues 34-55 (PKTVIIAAVASGAFIWILNFTY). The Extracellular portion of the chain corresponds to 56–59 (GRFW).

It belongs to the SEC61-beta family. As to quaternary structure, component of the protein translocase complex. Heterotrimer consisting of alpha (SecY), beta (SecG) and gamma (SecE) subunits. Can form oligomers of the heterotrimer.

It is found in the cell membrane. Its function is as follows. Involved in protein export. The function of the beta subunit is unknown, but it may be involved in stabilization of the trimeric complex. This chain is Preprotein translocase subunit SecG, found in Methanocella arvoryzae (strain DSM 22066 / NBRC 105507 / MRE50).